The following is a 235-amino-acid chain: tRNA pseudouridine synthase B (235 aa).

Asp45 (nucleophile) is an active-site residue.

It belongs to the pseudouridine synthase TruB family. Type 1 subfamily.

It catalyses the reaction uridine(55) in tRNA = pseudouridine(55) in tRNA. Its function is as follows. Responsible for synthesis of pseudouridine from uracil-55 in the psi GC loop of transfer RNAs. The chain is tRNA pseudouridine synthase B from Chlamydia abortus (strain DSM 27085 / S26/3) (Chlamydophila abortus).